The primary structure comprises 460 residues: Serine--tRNA ligase (460 aa).

Residues 50 to 65 show a composition bias toward basic and acidic residues; sequence DRNEVSSKIGELKQAG. Disordered regions lie at residues 50-71 and 109-129; these read DRNE…DAAQ and PDED…RREG. Over residues 109 to 121 the composition is skewed to acidic residues; sequence PDEDAPVGDSEAE. 241–243 is an L-serine binding site; that stretch reads TAE. ATP is bound by residues 272–274 and valine 288; that span reads RRE. Residue glutamate 295 participates in L-serine binding. 368–371 contacts ATP; sequence EVSS. Residue serine 404 participates in L-serine binding.

Belongs to the class-II aminoacyl-tRNA synthetase family. Type-1 seryl-tRNA synthetase subfamily. As to quaternary structure, homodimer. The tRNA molecule binds across the dimer.

It localises to the cytoplasm. It carries out the reaction tRNA(Ser) + L-serine + ATP = L-seryl-tRNA(Ser) + AMP + diphosphate + H(+). The catalysed reaction is tRNA(Sec) + L-serine + ATP = L-seryl-tRNA(Sec) + AMP + diphosphate + H(+). It functions in the pathway aminoacyl-tRNA biosynthesis; selenocysteinyl-tRNA(Sec) biosynthesis; L-seryl-tRNA(Sec) from L-serine and tRNA(Sec): step 1/1. Its function is as follows. Catalyzes the attachment of serine to tRNA(Ser). Is also able to aminoacylate tRNA(Sec) with serine, to form the misacylated tRNA L-seryl-tRNA(Sec), which will be further converted into selenocysteinyl-tRNA(Sec). The protein is Serine--tRNA ligase of Halobacterium salinarum (strain ATCC 29341 / DSM 671 / R1).